The chain runs to 84 residues: Antitoxin VapB30 (84 aa).

Its function is as follows. Antitoxin component of a type II toxin-antitoxin (TA) system. Upon expression in M.smegmatis neutralizes the effect of cognate toxin VapC30. The sequence is that of Antitoxin VapB30 (vapB30) from Mycobacterium tuberculosis (strain ATCC 25618 / H37Rv).